A 230-amino-acid polypeptide reads, in one-letter code: 3,4-dihydroxy-2-butanone 4-phosphate synthase (230 aa).

Residues 38 to 39 (RE), D43, 151 to 155 (RRGHT), and E175 contribute to the D-ribulose 5-phosphate site. Position 39 (E39) interacts with Mg(2+). H154 serves as a coordination point for Mg(2+).

Belongs to the DHBP synthase family. As to quaternary structure, homodimer. The cofactor is Mg(2+). Mn(2+) serves as cofactor.

The enzyme catalyses D-ribulose 5-phosphate = (2S)-2-hydroxy-3-oxobutyl phosphate + formate + H(+). The protein operates within cofactor biosynthesis; riboflavin biosynthesis; 2-hydroxy-3-oxobutyl phosphate from D-ribulose 5-phosphate: step 1/1. Its function is as follows. Catalyzes the conversion of D-ribulose 5-phosphate to formate and 3,4-dihydroxy-2-butanone 4-phosphate. The chain is 3,4-dihydroxy-2-butanone 4-phosphate synthase from Vibrio harveyi (Beneckea harveyi).